Reading from the N-terminus, the 282-residue chain is Large ribosomal subunit protein uL2 (282 aa).

Positions threonine 223 to lysine 282 are disordered.

This sequence belongs to the universal ribosomal protein uL2 family. In terms of assembly, part of the 50S ribosomal subunit. Forms a bridge to the 30S subunit in the 70S ribosome.

One of the primary rRNA binding proteins. Required for association of the 30S and 50S subunits to form the 70S ribosome, for tRNA binding and peptide bond formation. It has been suggested to have peptidyltransferase activity; this is somewhat controversial. Makes several contacts with the 16S rRNA in the 70S ribosome. The sequence is that of Large ribosomal subunit protein uL2 from Mycoplasma mycoides subsp. mycoides SC (strain CCUG 32753 / NCTC 10114 / PG1).